Consider the following 216-residue polypeptide: Thymidylate kinase (216 aa).

10-17 (GIDGCGKT) is an ATP binding site.

It belongs to the thymidylate kinase family.

The catalysed reaction is dTMP + ATP = dTDP + ADP. Phosphorylation of dTMP to form dTDP in both de novo and salvage pathways of dTTP synthesis. In Prochlorococcus marinus (strain MIT 9303), this protein is Thymidylate kinase.